The chain runs to 571 residues: Calcium-dependent protein kinase 16 (571 aa).

The disordered stretch occupies residues 1 to 74; the sequence is MGLCFSSAAK…TRHTPPHGKV (74 aa). Residue Gly2 is the site of N-myristoyl glycine attachment. Residue Cys4 is the site of S-palmitoyl cysteine attachment. Residues 63-72 are compositionally biased toward basic residues; sequence TPTRHTPPHG. One can recognise a Protein kinase domain in the interval 108–368; that stretch reads YTIGKLLGHG…AAQALSHPWV (261 aa). Residues 114–122 and Lys137 contribute to the ATP site; that span reads LGHGQFGYT. The active-site Proton acceptor is Asp234. Residue Ser274 is modified to Phosphoserine. The interval 374–404 is autoinhibitory domain; the sequence is ASEIPIDISVLNNMRQFVKFSRLKQFALRAL. EF-hand domains follow at residues 411-446, 448-483, 490-525, and 528-555; these read EELA…DHPW, LKDA…VNQL, KWQQ…KGSI, and LLEE…ASIK. Ca(2+)-binding residues include Asp424, Asp426, Asn428, Glu435, Asp461, Asn463, Asp465, Glu472, Asp503, Asp505, Asp507, Glu514, Asp533, Asp535, Asp537, and Lys539. Ser541 is modified (phosphoserine). Glu544 serves as a coordination point for Ca(2+).

The protein belongs to the protein kinase superfamily. Ser/Thr protein kinase family. CDPK subfamily.

Its subcellular location is the cell membrane. It is found in the nucleus. The enzyme catalyses L-seryl-[protein] + ATP = O-phospho-L-seryl-[protein] + ADP + H(+). It catalyses the reaction L-threonyl-[protein] + ATP = O-phospho-L-threonyl-[protein] + ADP + H(+). Its activity is regulated as follows. Activated by calcium. Autophosphorylation may play an important role in the regulation of the kinase activity. May play a role in signal transduction pathways that involve calcium as a second messenger. In Arabidopsis thaliana (Mouse-ear cress), this protein is Calcium-dependent protein kinase 16 (CPK16).